The primary structure comprises 457 residues: Argininosuccinate lyase (457 aa).

This sequence belongs to the lyase 1 family. Argininosuccinate lyase subfamily.

It localises to the cytoplasm. The catalysed reaction is 2-(N(omega)-L-arginino)succinate = fumarate + L-arginine. Its pathway is amino-acid biosynthesis; L-arginine biosynthesis; L-arginine from L-ornithine and carbamoyl phosphate: step 3/3. In Yersinia pseudotuberculosis serotype O:1b (strain IP 31758), this protein is Argininosuccinate lyase.